We begin with the raw amino-acid sequence, 172 residues long: uncharacterized protein (172 aa).

This is an uncharacterized protein from Mycoplasma pneumoniae (strain ATCC 29342 / M129 / Subtype 1) (Mycoplasmoides pneumoniae).